The primary structure comprises 152 residues: SsrA-binding protein (152 aa).

It belongs to the SmpB family.

It is found in the cytoplasm. Required for rescue of stalled ribosomes mediated by trans-translation. Binds to transfer-messenger RNA (tmRNA), required for stable association of tmRNA with ribosomes. tmRNA and SmpB together mimic tRNA shape, replacing the anticodon stem-loop with SmpB. tmRNA is encoded by the ssrA gene; the 2 termini fold to resemble tRNA(Ala) and it encodes a 'tag peptide', a short internal open reading frame. During trans-translation Ala-aminoacylated tmRNA acts like a tRNA, entering the A-site of stalled ribosomes, displacing the stalled mRNA. The ribosome then switches to translate the ORF on the tmRNA; the nascent peptide is terminated with the 'tag peptide' encoded by the tmRNA and targeted for degradation. The ribosome is freed to recommence translation, which seems to be the essential function of trans-translation. The chain is SsrA-binding protein from Sulfurihydrogenibium sp. (strain YO3AOP1).